Reading from the N-terminus, the 250-residue chain is Ribosomal RNA small subunit methyltransferase J (250 aa).

Residues 101–102, 117–118, 153–154, and aspartate 171 contribute to the S-adenosyl-L-methionine site; these read RD, ER, and SS.

The protein belongs to the methyltransferase superfamily. RsmJ family.

The protein localises to the cytoplasm. It carries out the reaction guanosine(1516) in 16S rRNA + S-adenosyl-L-methionine = N(2)-methylguanosine(1516) in 16S rRNA + S-adenosyl-L-homocysteine + H(+). Specifically methylates the guanosine in position 1516 of 16S rRNA. The protein is Ribosomal RNA small subunit methyltransferase J of Escherichia coli (strain SMS-3-5 / SECEC).